The sequence spans 398 residues: Tryptophan synthase beta chain (398 aa).

Position 90 is an N6-(pyridoxal phosphate)lysine (Lys90).

Belongs to the TrpB family. In terms of assembly, tetramer of two alpha and two beta chains. Pyridoxal 5'-phosphate is required as a cofactor.

It carries out the reaction (1S,2R)-1-C-(indol-3-yl)glycerol 3-phosphate + L-serine = D-glyceraldehyde 3-phosphate + L-tryptophan + H2O. It participates in amino-acid biosynthesis; L-tryptophan biosynthesis; L-tryptophan from chorismate: step 5/5. The beta subunit is responsible for the synthesis of L-tryptophan from indole and L-serine. This Anoxybacillus flavithermus (strain DSM 21510 / WK1) protein is Tryptophan synthase beta chain.